We begin with the raw amino-acid sequence, 169 residues long: Mitochondrial ATP-independent inner membrane protease subunit 1b (169 aa).

Residues S47 and K91 contribute to the active site.

The protein belongs to the peptidase S26 family. IMP1 subfamily. Heterodimer of 2 subunits, IMP1A/B and IMP12.

Its subcellular location is the mitochondrion inner membrane. Its function is as follows. Catalyzes the removal of transit peptides required for the targeting of proteins from the mitochondrial matrix, across the inner membrane, into the inter-membrane space. This is Mitochondrial ATP-independent inner membrane protease subunit 1b from Arabidopsis thaliana (Mouse-ear cress).